The sequence spans 351 residues: Phosphoribosylformylglycinamidine cyclo-ligase (351 aa).

Belongs to the AIR synthase family.

Its subcellular location is the cytoplasm. The enzyme catalyses 2-formamido-N(1)-(5-O-phospho-beta-D-ribosyl)acetamidine + ATP = 5-amino-1-(5-phospho-beta-D-ribosyl)imidazole + ADP + phosphate + H(+). It participates in purine metabolism; IMP biosynthesis via de novo pathway; 5-amino-1-(5-phospho-D-ribosyl)imidazole from N(2)-formyl-N(1)-(5-phospho-D-ribosyl)glycinamide: step 2/2. The polypeptide is Phosphoribosylformylglycinamidine cyclo-ligase (Xylella fastidiosa (strain Temecula1 / ATCC 700964)).